The chain runs to 358 residues: Dihydroorotate dehydrogenase (quinone) (358 aa).

Residues 61 to 65 (AGFDK) and glycine 85 contribute to the FMN site. Lysine 65 serves as a coordination point for substrate. Residue 110–114 (NRFGL) coordinates substrate. FMN is bound by residues asparagine 139 and asparagine 170. A substrate-binding site is contributed by asparagine 170. The active-site Nucleophile is the serine 173. Asparagine 175 is a binding site for substrate. 2 residues coordinate FMN: lysine 211 and serine 239. 240–241 (NT) lines the substrate pocket. Residues glycine 263, glycine 292, and 313–314 (YS) each bind FMN.

This sequence belongs to the dihydroorotate dehydrogenase family. Type 2 subfamily. In terms of assembly, monomer. It depends on FMN as a cofactor.

The protein resides in the cell membrane. The catalysed reaction is (S)-dihydroorotate + a quinone = orotate + a quinol. Its pathway is pyrimidine metabolism; UMP biosynthesis via de novo pathway; orotate from (S)-dihydroorotate (quinone route): step 1/1. Its function is as follows. Catalyzes the conversion of dihydroorotate to orotate with quinone as electron acceptor. The chain is Dihydroorotate dehydrogenase (quinone) from Methylorubrum extorquens (strain CM4 / NCIMB 13688) (Methylobacterium extorquens).